A 143-amino-acid polypeptide reads, in one-letter code: Mannitol-specific phosphotransferase enzyme IIA component (143 aa).

Residues 1 to 142 (MKLLKNNIYI…DKVLEFLAKH (142 aa)) enclose the PTS EIIA type-2 domain. The active-site Tele-phosphohistidine intermediate is the H61. H61 carries the post-translational modification Phosphohistidine; by HPr.

It is found in the cytoplasm. Functionally, the phosphoenolpyruvate-dependent sugar phosphotransferase system (sugar PTS), a major carbohydrate active transport system, catalyzes the phosphorylation of incoming sugar substrates concomitantly with their translocation across the cell membrane. The enzyme II CmtAB PTS system is involved in D-mannitol transport. This is Mannitol-specific phosphotransferase enzyme IIA component (mtlF) from Mycoplasma pneumoniae (strain ATCC 29342 / M129 / Subtype 1) (Mycoplasmoides pneumoniae).